A 1106-amino-acid chain; its full sequence is Platelet-derived growth factor receptor beta (1106 aa).

The first 32 residues, 1–32, serve as a signal peptide directing secretion; the sequence is MRLPGAMPALALKGELLLLSLLLLLEPQISQG. Ig-like C2-type domains follow at residues 33–120, 129–210, 214–309, 331–403, and 416–524; these read LVVT…YIFV, PNDA…YRLQ, INVS…INIT, HRSR…HEDA, and PVRV…VIVV. Residues 33–532 are Extracellular-facing; it reads LVVTPPGPEL…VVPHSLPFKV (500 aa). 3 N-linked (GlcNAc...) asparagine glycosylation sites follow: Asn-45, Asn-89, and Asn-103. Cys-54 and Cys-100 are disulfide-bonded. Cysteines 149 and 190 form a disulfide. N-linked (GlcNAc...) asparagine glycans are attached at residues Asn-215 and Asn-230. A disulfide bridge links Cys-235 with Cys-291. Asn-292, Asn-307, Asn-354, Asn-371, Asn-468, and Asn-479 each carry an N-linked (GlcNAc...) asparagine glycan. Cysteines 436 and 508 form a disulfide. A helical membrane pass occupies residues 533 to 553; it reads VVISAILALVVLTIISLIILI. Residues 554 to 1106 lie on the Cytoplasmic side of the membrane; the sequence is MLWQKKPRYE…PRAEAEDSFL (553 aa). Residues Tyr-562, Tyr-579, and Tyr-581 each carry the phosphotyrosine; by autocatalysis modification. In terms of domain architecture, Protein kinase spans 600–962; the sequence is LVLGRTLGSG…QLVLLLERLL (363 aa). ATP is bound by residues 606 to 614 and Lys-634; that span reads LGSGAFGQV. At Tyr-686 the chain carries Phosphotyrosine; by ABL1 and ABL2. Phosphotyrosine; by autocatalysis occurs at positions 716, 740, 751, 763, 771, 775, and 778. Asp-826 acts as the Proton acceptor in catalysis. A Phosphotyrosine; by autocatalysis modification is found at Tyr-857. Phosphotyrosine; by ABL1 and ABL2 occurs at positions 934 and 970. Phosphotyrosine; by autocatalysis is present on residues Tyr-1009 and Tyr-1021. Positions 1019 to 1106 are disordered; it reads NDYIIPLPDP…PRAEAEDSFL (88 aa). The span at 1043 to 1060 shows a compositional bias: polar residues; the sequence is SLASSTLNEVNTSSTISC. The segment covering 1066–1088 has biased composition (acidic residues); the sequence is PQDEPEPEPQLELQVEPEPELEQ.

The protein belongs to the protein kinase superfamily. Tyr protein kinase family. CSF-1/PDGF receptor subfamily. As to quaternary structure, interacts with homodimeric PDGFB and PDGFD, and with heterodimers formed by PDGFA and PDGFB. May also interact with homodimeric PDGFC. Monomer in the absence of bound ligand. Interaction with homodimeric PDGFB, heterodimers formed by PDGFA and PDGFB or homodimeric PDGFD, leads to receptor dimerization, where both PDGFRA homodimers and heterodimers with PDGFRB are observed. Interacts with SH2B2/APS. Interacts directly (tyrosine phosphorylated) with SHB. Interacts (tyrosine phosphorylated) with PIK3R1 and RASA1. Interacts (tyrosine phosphorylated) with CBL. Interacts (tyrosine phosphorylated) with SRC and SRC family kinases. Interacts (tyrosine phosphorylated) with PIK3C2B, maybe indirectly. Interacts (tyrosine phosphorylated) with SHC1, GRB7, GRB10 and NCK1. Interaction with GRB2 is mediated by SHC1. Interacts (via C-terminus) with NHERF1. Autophosphorylated on tyrosine residues upon ligand binding. Autophosphorylation occurs in trans, i.e. one subunit of the dimeric receptor phosphorylates tyrosine residues on the other subunit. Phosphorylation at Tyr-579, and to a lesser degree, at Tyr-581, is important for interaction with SRC family kinases. Phosphorylation at Tyr-740 and Tyr-751 is important for interaction with PIK3R1. Phosphorylation at Tyr-751 is important for interaction with NCK1. Phosphorylation at Tyr-771 and Tyr-857 is important for interaction with RASA1/GAP. Phosphorylation at Tyr-857 is important for efficient phosphorylation of PLCG1 and PTPN11, resulting in increased phosphorylation of AKT1, MAPK1/ERK2 and/or MAPK3/ERK1, PDCD6IP/ALIX and STAM, and in increased cell proliferation. Phosphorylation at Tyr-1009 is important for interaction with PTPN11. Phosphorylation at Tyr-1009 and Tyr-1021 is important for interaction with PLCG1. Phosphorylation at Tyr-1021 is important for interaction with CBL; PLCG1 and CBL compete for the same binding site. Dephosphorylated by PTPRJ at Tyr-751, Tyr-857, Tyr-1009 and Tyr-1021. Dephosphorylated by PTPN2 at Tyr-579 and Tyr-1021. Post-translationally, N-glycosylated. In terms of processing, ubiquitinated. After autophosphorylation, the receptor is polyubiquitinated, leading to its degradation.

It localises to the cell membrane. It is found in the cytoplasmic vesicle. Its subcellular location is the lysosome lumen. It catalyses the reaction L-tyrosyl-[protein] + ATP = O-phospho-L-tyrosyl-[protein] + ADP + H(+). Its activity is regulated as follows. Present in an inactive conformation in the absence of bound ligand. Binding of PDGFB and/or PDGFD leads to dimerization and activation by autophosphorylation on tyrosine residues. Inhibited by imatinib. Functionally, tyrosine-protein kinase that acts as a cell-surface receptor for homodimeric PDGFB and PDGFD and for heterodimers formed by PDGFA and PDGFB, and plays an essential role in the regulation of embryonic development, cell proliferation, survival, differentiation, chemotaxis and migration. Plays an essential role in blood vessel development by promoting proliferation, migration and recruitment of pericytes and smooth muscle cells to endothelial cells. Plays a role in the migration of vascular smooth muscle cells and the formation of neointima at vascular injury sites. Required for normal development of the cardiovascular system. Required for normal recruitment of pericytes (mesangial cells) in the kidney glomerulus, and for normal formation of a branched network of capillaries in kidney glomeruli. Promotes rearrangement of the actin cytoskeleton and the formation of membrane ruffles. Binding of its cognate ligands - homodimeric PDGFB, heterodimers formed by PDGFA and PDGFB or homodimeric PDGFD -leads to the activation of several signaling cascades; the response depends on the nature of the bound ligand and is modulated by the formation of heterodimers between PDGFRA and PDGFRB. Phosphorylates PLCG1, PIK3R1, PTPN11, RASA1/GAP, CBL, SHC1 and NCK1. Activation of PLCG1 leads to the production of the cellular signaling molecules diacylglycerol and inositol 1,4,5-trisphosphate, mobilization of cytosolic Ca(2+) and the activation of protein kinase C. Phosphorylation of PIK3R1, the regulatory subunit of phosphatidylinositol 3-kinase, leads to the activation of the AKT1 signaling pathway. Phosphorylation of SHC1, or of the C-terminus of PTPN11, creates a binding site for GRB2, resulting in the activation of HRAS, RAF1 and down-stream MAP kinases, including MAPK1/ERK2 and/or MAPK3/ERK1. Promotes phosphorylation and activation of SRC family kinases. Promotes phosphorylation of PDCD6IP/ALIX and STAM. Receptor signaling is down-regulated by protein phosphatases that dephosphorylate the receptor and its down-stream effectors, and by rapid internalization of the activated receptor. The polypeptide is Platelet-derived growth factor receptor beta (PDGFRB) (Homo sapiens (Human)).